A 201-amino-acid polypeptide reads, in one-letter code: Glycolipid transfer protein (201 aa).

A glycolipid transfer protein homology domain region spans residues 28 to 168 (IATTQFLEAC…KDFYAKLGDD (141 aa)).

Its function is as follows. Cargo transport protein that plays a key role in transport and secretion of liamocins, glycolipids (also called heavy oils) composed of a single mannitol or arabitol headgroup linked to either three, four or even six 3,5-dihydroxydecanoic ester tail-groups. This chain is Glycolipid transfer protein, found in Aureobasidium melanogenum (Aureobasidium pullulans var. melanogenum).